The primary structure comprises 127 residues: Protein KRTCAP2 homolog (127 aa).

4 helical membrane passes run 13–33 (LISL…SNFF), 41–61 (ILGG…IGAI), 65–85 (VKLL…SSVH), and 87–107 (VSGT…NHAS).

Belongs to the KRTCAP2 family. In terms of assembly, component of the oligosaccharyltransferase (OST) complex.

The protein resides in the membrane. Its function is as follows. Subunit of the oligosaccharyl transferase (OST) complex that catalyzes the initial transfer of a defined glycan (Glc(3)Man(9)GlcNAc(2) in eukaryotes) from the lipid carrier dolichol-pyrophosphate to an asparagine residue within an Asn-X-Ser/Thr consensus motif in nascent polypeptide chains, the first step in protein N-glycosylation. N-glycosylation occurs cotranslationally and the complex associates with the Sec61 complex at the channel-forming translocon complex that mediates protein translocation across the endoplasmic reticulum (ER). All subunits are required for a maximal enzyme activity. This is Protein KRTCAP2 homolog from Dictyostelium discoideum (Social amoeba).